Consider the following 160-residue polypeptide: Regulatory protein RecX (160 aa).

Belongs to the RecX family.

It localises to the cytoplasm. Modulates RecA activity. The sequence is that of Regulatory protein RecX from Xanthomonas oryzae pv. oryzae (strain MAFF 311018).